A 431-amino-acid chain; its full sequence is Saglin (431 aa).

A signal peptide spans 1–39 (MSVRDYSGVQVISSRKHRSMSRLPTVLLLLASAAVLAAG). Asn95 carries an N-linked (GlcNAc...) asparagine glycan. Residues 120-169 (LDDAQRQMEQEHRQYAATLEEQLHAAQQETQQEQEMKKALQKQLDALTDS) are a coiled coil.

As to quaternary structure, homodimer. Female salivary gland (at protein level). Not detected in female carcass without salivary glands, midgut and hemolymph (at protein level). Probably not expressed in male tissues.

The protein localises to the secreted. Functionally, (Microbial infection) Facilitates efficient midgut colonization by Plasmodium berghei parasites. Promotes successful transmission of Plasmodium berghei at low infection densities. Its function is as follows. (Microbial infection) Facilitates efficient midgut colonization by Plasmodium falciparum. The sequence is that of Saglin from Anopheles coluzzii (African malaria mosquito).